A 137-amino-acid polypeptide reads, in one-letter code: MRHGKVHRKLNRTAEHRKAMFANMCAALIKHEQIVTTLPKAKELRPIVEKLVTLGKKGGLALRRQAIAEMRDVDQVKKLFDVLAPRYKDRNGGYTRIIKAGFRYGDNAAMAVIEFVDRDVDAKGQDSGPVQETSEAA.

Belongs to the bacterial ribosomal protein bL17 family. In terms of assembly, part of the 50S ribosomal subunit. Contacts protein L32.

This Bradyrhizobium sp. (strain BTAi1 / ATCC BAA-1182) protein is Large ribosomal subunit protein bL17.